The sequence spans 674 residues: Acyl-coenzyme A oxidase acox-1.1 (674 aa).

Residues 149 to 152, 157 to 158, and glycine 191 contribute to the FAD site; these read YAQT and GT. Substrate contacts are provided by residues 285-288 and arginine 295; that span reads KINY. FAD-binding positions include arginine 320 and 340–343; that span reads QQHR. 4 residues coordinate ATP: histidine 342, serine 392, histidine 396, and glutamine 404. Position 411 (glycine 411) interacts with FAD. Substrate is bound at residue 433-434; that stretch reads YE. The active-site Proton acceptor is glutamate 434. Glutamate 436 lines the FAD pocket. ATP contacts are provided by residues 533 to 536 and tyrosine 581; that span reads RASR. A Microbody targeting signal motif is present at residues 672-674; that stretch reads SKL.

It belongs to the acyl-CoA oxidase family. Homodimer. Forms a heterodimer with acox-1.2. Forms a heterodimer with acox-1.3; the interaction may be important for the stability of acox-1.3. It depends on FAD as a cofactor. Expressed in hypodermis and intestine.

It localises to the peroxisome. The enzyme catalyses nonanoyl-CoA + O2 = (2E)-nonenoyl-CoA + H2O2. The catalysed reaction is dodecanoyl-CoA + O2 = (2E)-dodecenoyl-CoA + H2O2. It carries out the reaction a 2,3-saturated acyl-CoA + O2 = a (2E)-enoyl-CoA + H2O2. It catalyses the reaction heptanoyl-CoA + O2 = (2E)-heptenoyl-CoA + H2O2. The enzyme catalyses (8R)-8-hydroxynonanoyl-CoA + O2 = (2E,8R)-8-hydroxynonenoyl-CoA + H2O2. The catalysed reaction is pentanoyl-CoA + O2 = (2E)-pentenoyl-CoA + H2O2. It carries out the reaction hexadecanoyl-CoA + O2 = (2E)-hexadecenoyl-CoA + H2O2. It catalyses the reaction IC-asc-C7-CoA + O2 = IC-asc-DeltaC7-CoA + H2O2. The enzyme catalyses IC-asc-C9-CoA + O2 = IC-asc-DeltaC9-CoA + H2O2. The catalysed reaction is asc-omegaC5-CoA + O2 = asc-omegaDeltaC5-CoA + H2O2. It carries out the reaction asc-C7-CoA + O2 = asc-DeltaC7-CoA + H2O2. It catalyses the reaction asc-omegaC7-CoA + O2 = asc-omegaDeltaC7-CoA + H2O2. The enzyme catalyses asc-C9-CoA + O2 = asc-DeltaC9-CoA + H2O2. The catalysed reaction is asc-C13-CoA + O2 = asc-DeltaC13-CoA + H2O2. Its pathway is lipid metabolism; peroxisomal fatty acid beta-oxidation. With respect to regulation, activated by ATP. ATP binding leads to a conformational change that promotes FAD cofactor binding and enzyme activity. ATP binding likely occurs during acox-1.1 folding and/or dimer formation. Involved in the first step of peroxisomal beta-oxidation by catalyzing the desaturation of fatty acid-derived side chains. Specifically, catalyzes the desaturation of fatty acids heptanoyl-CoA (C7), nonanoyl-CoA (C9), dodecanoyl-CoA (C12) and to a lesser extent pentanoyl-CoA (C5) and hexadecanoyl-CoA (C16), and hydroxylated fatty acid hydroxynonanoyl-CoA. Also, catalyzes the desaturation fatty acid-derived side chains of ascaroside pheromones, which regulates development and behavior. Specifically, shortens ascaroside with 5-carbon omega side chain (asc-omega-C5), 7-carbon side chain (asc-C7), 9-carbon side chain (asc-C9), 11-carbon side chain (asc-C11), 13-carbon side chain (asc-C13), 15-carbon side chain (asc-C15) and to a lesser extent ascarosides with 7-omega-carbon side chain (asc-omega-C7). Also shortens indol-3-carbonyl(IC)-ascarosides with 7-carbon side chain (IC-asc-C7) and to a lesser extent (IC)-ascarosides with 9-carbon side chain (IC-asc-C9). May associate and regulate the folding and/or the catalytic activity of other acyl-coenzyme A oxidases including acox-1.2, acox-1.3, acox-1.4 and acox-3 modulating the type of ascarosides produced. In association with acox-1.3, catalyzes the desaturation of asc-C7-CoA but not of fatty acids or hydroxylated fatty acids. Involved in the biosynthesis of asc-C6-MK (daumone 2) and asc-delta-C9 (daumone 3) but not asc-C7 (daumone 1); daumones are pheromones produced during unfavourable growth conditions which promote entry into the dauer stage. The sequence is that of Acyl-coenzyme A oxidase acox-1.1 from Caenorhabditis elegans.